Here is a 210-residue protein sequence, read N- to C-terminus: uncharacterized protein (210 aa).

The region spanning 2 to 91 (SRHPEVKWAQ…AEAKWWKKLV (90 aa)) is the CS domain. The interval 165–210 (GMGGMGGMDEFEDESDDEEEVSKPQDAEKAAEAGKSQESDAKTETS) is disordered. The span at 173–184 (DEFEDESDDEEE) shows a compositional bias: acidic residues. Residues 185–210 (VSKPQDAEKAAEAGKSQESDAKTETS) are compositionally biased toward basic and acidic residues.

This is an uncharacterized protein from Oryza sativa subsp. indica (Rice).